A 1048-amino-acid polypeptide reads, in one-letter code: Self-sufficient cytochrome P450 monooxygenase CYP505E4 (1048 aa).

C405 is a binding site for heme. The 142-residue stretch at 499–640 (VSFFYGSNSG…DLEVWEETNL (142 aa)) folds into the Flavodoxin-like domain. Residues 505–509 (SNSGT) and 584–616 (VFGC…TRLA) contribute to the FMN site. The FAD-binding FR-type domain maps to 678-906 (RDLIEAKVTA…RPAKDAFHLP (229 aa)).

In the N-terminal section; belongs to the cytochrome P450 family. It depends on FAD as a cofactor. Requires FMN as cofactor. Heme is required as a cofactor.

The catalysed reaction is 2 oxidized [cytochrome P450] + NADPH = 2 reduced [cytochrome P450] + NADP(+) + H(+). It carries out the reaction an organic molecule + reduced [NADPH--hemoprotein reductase] + O2 = an alcohol + oxidized [NADPH--hemoprotein reductase] + H2O + H(+). It catalyses the reaction dodecanoate + reduced [NADPH--hemoprotein reductase] + O2 = 5-hydroxydodecanoate + oxidized [NADPH--hemoprotein reductase] + H2O + H(+). The enzyme catalyses tetradecanoate + reduced [NADPH--hemoprotein reductase] + O2 = 7-hydroxytetradecanoate + oxidized [NADPH--hemoprotein reductase] + H2O + H(+). The catalysed reaction is dodecan-1-ol + reduced [NADPH--hemoprotein reductase] + O2 = 1,5-dodecanediol + oxidized [NADPH--hemoprotein reductase] + H2O + H(+). It carries out the reaction dodecan-1-ol + reduced [NADPH--hemoprotein reductase] + O2 = 1,4-dodecanediol + oxidized [NADPH--hemoprotein reductase] + H2O + H(+). It catalyses the reaction dodecan-1-ol + reduced [NADPH--hemoprotein reductase] + O2 = 1,6-dodecanediol + oxidized [NADPH--hemoprotein reductase] + H2O + H(+). Its function is as follows. Self-sufficient cytochrome P450 monooxygenase that catalyzes the regioselective in-chain hydroxylation of alkanes, fatty alcohols, and fatty acids at the omega-7 position. Performs hydroxylation of C10-C16 n-alkanes and C12 and C14 fatty alcohols; and thereby enables the one step biocatalytic synthesis of rare alcohols such as 5-dodecanol and 7-tetradecanol. Converts 1-dodecanol into 1,5-dodecanediol as major product with very little sub-terminally hydroxylated products with the 1,4-dodecanediol and 1,6-dodecanediol more abundant. Converts dodecanoic acid to 5-hydroxydodecanoic acid which can be further converted into delta-dodecalactone by lactonization of the 5-hydroxy acid at low pH. Also gives sub-terminal hydroxylation of dodecanoic acid with 9-hydroxydodecanoic acid being the second most abundant product. The polypeptide is Self-sufficient cytochrome P450 monooxygenase CYP505E4 (Penicillium expansum (Blue mold rot fungus)).